The primary structure comprises 220 residues: MLKLHGFSVSNYYNMVKLALLEKGLPFEEVTFYGGQAPQALEVSPRGKVPVLETEHGFLSETSVILDYIEQTQSGKALLPADPFEQAKVRELLKEIELYIELPARTCYAESFFGMSVEPLIKEKARADLLAGFATLKRNGRFAPYVAGEQLTLADLMFCFSVDLANAVGKKVLSIDFLADFPQAKALLQLMGENPHMARIMADKEASMPAFMEMIRSGKR.

Residues 1-77 (MLKLHGFSVS…YIEQTQSGKA (77 aa)) enclose the GST N-terminal domain. Residues Tyr12, Val49, and 61-62 (ET) each bind glutathione. Residues 82-211 (DPFEQAKVRE…ADKEASMPAF (130 aa)) form the GST C-terminal domain.

It belongs to the GST superfamily. In terms of assembly, monomer and homodimer.

Its subcellular location is the cytoplasm. It catalyses the reaction RX + glutathione = an S-substituted glutathione + a halide anion + H(+). Functionally, conjugation of reduced glutathione to a wide number of exogenous and endogenous hydrophobic electrophiles. The sequence is that of Glutathione S-transferase from Pseudomonas putida (strain ATCC 700007 / DSM 6899 / JCM 31910 / BCRC 17059 / LMG 24140 / F1).